We begin with the raw amino-acid sequence, 154 residues long: Acidic phospholipase A2 2 (154 aa).

Positions 1 to 19 are cleaved as a signal peptide; it reads MHPAHLLVPLGVCVSLLGA. Positions 20 to 27 are excised as a propeptide; that stretch reads ARIPPLPL. 7 disulfides stabilise this stretch: Cys-38/Cys-104, Cys-54/Cys-153, Cys-56/Cys-72, Cys-71/Cys-132, Cys-78/Cys-125, Cys-88/Cys-118, and Cys-111/Cys-123. The Ca(2+) site is built by Tyr-55, Gly-57, and Gly-59. His-75 is an active-site residue. Asp-76 is a binding site for Ca(2+). Residue Asp-126 is part of the active site.

It belongs to the phospholipase A2 family. Group I subfamily. D49 sub-subfamily. Monomer. It depends on Ca(2+) as a cofactor. In terms of tissue distribution, expressed by the venom gland.

The protein localises to the secreted. The catalysed reaction is a 1,2-diacyl-sn-glycero-3-phosphocholine + H2O = a 1-acyl-sn-glycero-3-phosphocholine + a fatty acid + H(+). Snake venom phospholipase A2 (PLA2) that shows moderate enzymatic activity and exhibits procoagulant activity. PLA2 catalyzes the calcium-dependent hydrolysis of the 2-acyl groups in 3-sn-phosphoglycerides. This chain is Acidic phospholipase A2 2, found in Pseudonaja textilis (Eastern brown snake).